We begin with the raw amino-acid sequence, 328 residues long: Probable voltage-gated potassium channel subunit beta (328 aa).

The NADP(+) site is built by tryptophan 21, glutamine 27, and aspartate 49. The active-site Proton donor/acceptor is tyrosine 54. Positions 152, 178, 207, 208, 209, 210, 211, 218, 229, 285, 287, 291, 294, and 295 each coordinate NADP(+).

This sequence belongs to the shaker potassium channel beta subunit family. As to quaternary structure, forms heteromultimeric complexes with potassium channel alpha subunits. As to expression, expressed in late-developed leaves with the highest expression in the flag leaf (at protein level).

Its function is as follows. Probable accessory potassium channel protein which modulates the activity of the pore-forming alpha subunit. In Oryza sativa subsp. japonica (Rice), this protein is Probable voltage-gated potassium channel subunit beta (KOB1).